A 331-amino-acid polypeptide reads, in one-letter code: Ribosomal RNA small subunit methyltransferase H (331 aa).

S-adenosyl-L-methionine-binding positions include 39 to 41, D56, F83, D100, and Q107; that span reads GGY.

The protein belongs to the methyltransferase superfamily. RsmH family.

It localises to the cytoplasm. It carries out the reaction cytidine(1402) in 16S rRNA + S-adenosyl-L-methionine = N(4)-methylcytidine(1402) in 16S rRNA + S-adenosyl-L-homocysteine + H(+). Functionally, specifically methylates the N4 position of cytidine in position 1402 (C1402) of 16S rRNA. The polypeptide is Ribosomal RNA small subunit methyltransferase H (Bartonella bacilliformis (strain ATCC 35685 / KC583 / Herrer 020/F12,63)).